The sequence spans 368 residues: Flavanone 3-dioxygenase (368 aa).

The region spanning Cys191–Pro295 is the Fe2OG dioxygenase domain. Fe cation contacts are provided by His218, Asp220, and His276. Arg286 is a 2-oxoglutarate binding site.

Belongs to the iron/ascorbate-dependent oxidoreductase family. It depends on Fe(2+) as a cofactor. The cofactor is L-ascorbate.

It catalyses the reaction a (2S)-flavan-4-one + 2-oxoglutarate + O2 = a (2R,3R)-dihydroflavonol + succinate + CO2. It participates in secondary metabolite biosynthesis; flavonoid biosynthesis. Involved in the conversion of (2S)-naringenin to (+)-(2R/3R)-dihydrokaempferol. The polypeptide is Flavanone 3-dioxygenase (FHT) (Petroselinum crispum (Parsley)).